The chain runs to 80 residues: Exodeoxyribonuclease 7 small subunit (80 aa).

This sequence belongs to the XseB family. As to quaternary structure, heterooligomer composed of large and small subunits.

Its subcellular location is the cytoplasm. It carries out the reaction Exonucleolytic cleavage in either 5'- to 3'- or 3'- to 5'-direction to yield nucleoside 5'-phosphates.. Functionally, bidirectionally degrades single-stranded DNA into large acid-insoluble oligonucleotides, which are then degraded further into small acid-soluble oligonucleotides. In Vibrio cholerae serotype O1 (strain ATCC 39541 / Classical Ogawa 395 / O395), this protein is Exodeoxyribonuclease 7 small subunit.